The primary structure comprises 357 residues: Sulfate/thiosulfate import ATP-binding protein CysA (357 aa).

An ABC transporter domain is found at 3–237 (IQIQGVSKQY…PASPFVYDFL (235 aa)). Position 35 to 42 (35 to 42 (GPSGSGKT)) interacts with ATP.

This sequence belongs to the ABC transporter superfamily. Sulfate/tungstate importer (TC 3.A.1.6) family. In terms of assembly, the complex is composed of two ATP-binding proteins (CysA), two transmembrane proteins (CysT and CysW) and a solute-binding protein (CysP).

It localises to the cell membrane. It carries out the reaction sulfate(out) + ATP + H2O = sulfate(in) + ADP + phosphate + H(+). It catalyses the reaction thiosulfate(out) + ATP + H2O = thiosulfate(in) + ADP + phosphate + H(+). In terms of biological role, part of the ABC transporter complex CysAWTP involved in sulfate/thiosulfate import. Responsible for energy coupling to the transport system. The protein is Sulfate/thiosulfate import ATP-binding protein CysA of Bacillus cereus (strain ATCC 10987 / NRS 248).